Reading from the N-terminus, the 374-residue chain is Spore germination protein GerLB (374 aa).

10 consecutive transmembrane segments (helical) span residues 16–36, 44–64, 86–106, 122–142, 149–169, 192–212, 227–247, 279–301, 313–333, and 341–361; these read IGFA…PRDI, DGWI…WFVT, PVAY…TAYE, TPIQ…IAGS, LNVL…LLNI, VKNS…AVLL, AVMV…SVFT, FFTT…ASLL, IFIF…SSLN, and YLAW…LIVY.

The protein belongs to the amino acid-polyamine-organocation (APC) superfamily. Spore germination protein (SGP) (TC 2.A.3.9) family.

Its subcellular location is the membrane. Contributes to the L-alanine germination response. The polypeptide is Spore germination protein GerLB (gerLB) (Bacillus cereus).